The sequence spans 315 residues: Transaldolase (315 aa).

Residue K125 is the Schiff-base intermediate with substrate of the active site.

This sequence belongs to the transaldolase family. Type 1 subfamily. In terms of assembly, homodimer.

Its subcellular location is the cytoplasm. It carries out the reaction D-sedoheptulose 7-phosphate + D-glyceraldehyde 3-phosphate = D-erythrose 4-phosphate + beta-D-fructose 6-phosphate. It participates in carbohydrate degradation; pentose phosphate pathway; D-glyceraldehyde 3-phosphate and beta-D-fructose 6-phosphate from D-ribose 5-phosphate and D-xylulose 5-phosphate (non-oxidative stage): step 2/3. Transaldolase is important for the balance of metabolites in the pentose-phosphate pathway. The sequence is that of Transaldolase from Leptothrix cholodnii (strain ATCC 51168 / LMG 8142 / SP-6) (Leptothrix discophora (strain SP-6)).